A 477-amino-acid polypeptide reads, in one-letter code: Glycogen synthase (477 aa).

K15 is an ADP-alpha-D-glucose binding site.

Belongs to the glycosyltransferase 1 family. Bacterial/plant glycogen synthase subfamily.

The enzyme catalyses [(1-&gt;4)-alpha-D-glucosyl](n) + ADP-alpha-D-glucose = [(1-&gt;4)-alpha-D-glucosyl](n+1) + ADP + H(+). Its pathway is glycan biosynthesis; glycogen biosynthesis. In terms of biological role, synthesizes alpha-1,4-glucan chains using ADP-glucose. This is Glycogen synthase from Streptococcus pneumoniae serotype 4 (strain ATCC BAA-334 / TIGR4).